A 117-amino-acid chain; its full sequence is DNA-directed RNA polymerase subunit omega (117 aa).

Positions 96–105 are enriched in basic and acidic residues; that stretch reads KEEAEEEAKQ. Residues 96-117 form a disordered region; it reads KEEAEEEAKQKNSRAAKAAAAE. Over residues 108 to 117 the composition is skewed to low complexity; it reads SRAAKAAAAE.

It belongs to the RNA polymerase subunit omega family. As to quaternary structure, the RNAP catalytic core consists of 2 alpha, 1 beta, 1 beta' and 1 omega subunit. When a sigma factor is associated with the core the holoenzyme is formed, which can initiate transcription.

It catalyses the reaction RNA(n) + a ribonucleoside 5'-triphosphate = RNA(n+1) + diphosphate. Promotes RNA polymerase assembly. Latches the N- and C-terminal regions of the beta' subunit thereby facilitating its interaction with the beta and alpha subunits. This is DNA-directed RNA polymerase subunit omega from Lactococcus lactis subsp. cremoris (strain MG1363).